Consider the following 132-residue polypeptide: L-ectoine synthase (132 aa).

It belongs to the ectoine synthase family.

It catalyses the reaction (2S)-4-acetamido-2-aminobutanoate = L-ectoine + H2O. The protein operates within amine and polyamine biosynthesis; ectoine biosynthesis; L-ectoine from L-aspartate 4-semialdehyde: step 3/3. Catalyzes the circularization of gamma-N-acetyl-alpha,gamma-diaminobutyric acid (ADABA) to ectoine (1,4,5,6-tetrahydro-2-methyl-4-pyrimidine carboxylic acid), which is an excellent osmoprotectant. This Bordetella avium (strain 197N) protein is L-ectoine synthase.